Consider the following 80-residue polypeptide: Protein Vpu (80 aa).

At 1 to 7 (MLSLQIL) the chain is on the extracellular side. A helical transmembrane segment spans residues 8 to 28 (AIVALVVAAIIAIVVWSIVFI). At 29-80 (EYRKILRQRKIDRLIDRIREREEDSGNESEGDQEELAALERGHLAPWDVDDL) the chain is on the cytoplasmic side. The tract at residues 49-80 (REEDSGNESEGDQEELAALERGHLAPWDVDDL) is disordered. Ser53 and Ser57 each carry phosphoserine; by host CK2. The segment covering 53–65 (SGNESEGDQEELA) has biased composition (acidic residues).

This sequence belongs to the HIV-1 VPU protein family. Homopentamer. Interacts with host CD4 and BRTC; these interactions induce proteasomal degradation of CD4. Interacts with host BST2; this interaction leads to the degradation of host BST2. Interacts with host FBXW11. Interacts with host AP1M1; this interaction plays a role in the mistrafficking and subsequent degradation of host BST2. Interacts with host RANBP2; this interaction allows Vpu to down-regulate host BLM sumoylation. Phosphorylated by host CK2. This phosphorylation is necessary for interaction with human BTRC and degradation of CD4.

The protein resides in the host membrane. With respect to regulation, ion channel activity is inhibited by hexamethylene amiloride in vitro. Functionally, enhances virion budding by targeting host CD4 and Tetherin/BST2 to proteasome degradation. Degradation of CD4 prevents any unwanted premature interactions between viral Env and its host receptor CD4 in the endoplasmic reticulum. Degradation of antiretroviral protein Tetherin/BST2 is important for virion budding, as BST2 tethers new viral particles to the host cell membrane. Mechanistically, Vpu bridges either CD4 or BST2 to BTRC, a substrate recognition subunit of the Skp1/Cullin/F-box protein E3 ubiquitin ligase, induces their ubiquitination and subsequent proteasomal degradation. The alteration of the E3 ligase specificity by Vpu seems to promote the degradation of host IKBKB, leading to NF-kappa-B down-regulation and subsequent apoptosis. Acts as a viroporin that forms an oligomeric ion channel in membranes. Modulates the host DNA repair mechanisms to promote degradation of nuclear viral cDNA in cells that are already productively infected in order to suppress immune sensing and proviral hyper-integration (superinfection). Manipulates PML-NBs and modulates SUMOylation of host BLM protein thereby enhancing its DNA-end processing activity toward viral unintegrated linear DNA. Also inhibits RAD52-mediated homologous repair of viral cDNA, preventing the generation of dead-end circular forms of single copies of the long terminal repeat and permitting sustained nucleolytic attack. In Human immunodeficiency virus type 1 group M subtype B (strain 89.6) (HIV-1), this protein is Protein Vpu.